The chain runs to 214 residues: Membrane antigen containing repeating peptides (214 aa).

Tandem repeats lie at residues 1–14 (QETS…EETL), 15–28 (QETS…EETL), 29–42 (QETS…EETL), and 43–56 (QETS…EETL). A disordered region spans residues 1 to 31 (QETSAKLADTEETLQETSAKLADTEETLQET). The interval 1–56 (QETSAKLADTEETLQETSAKLADTEETLQETSAKLADTEETLQETSAKLADTEETL) is 4 X 14 AA tandem repeats. The disordered stretch occupies residues 180–214 (CSLHPTPRRLGDVSNRENSIENKTRSASRLSGRLF). Over residues 188-203 (RLGDVSNRENSIENKT) the composition is skewed to basic and acidic residues.

It localises to the membrane. The sequence is that of Membrane antigen containing repeating peptides from Leishmania major.